Reading from the N-terminus, the 483-residue chain is Zinc metalloproteinase/disintegrin (483 aa).

The signal sequence occupies residues 1 to 20 (MIQVLLVTVCLAVFPYQGSS). A propeptide spanning residues 21–190 (IILESGNVND…KASQLYLTPE (170 aa)) is cleaved from the precursor. Residues 197-395 (RYVKLAIVVD…YKPQCILNAP (199 aa)) form the Peptidase M12B domain. Cystine bridges form between cysteine 308/cysteine 390, cysteine 352/cysteine 374, and cysteine 354/cysteine 357. Position 333 (histidine 333) interacts with Zn(2+). The active site involves glutamate 334. Histidine 337 and histidine 343 together coordinate Zn(2+). A propeptide spanning residues 396 to 411 (LRTDTVSTPVSGNELL) is cleaved from the precursor. In terms of domain architecture, Disintegrin spans 403–483 (TPVSGNELLE…SDDCPRWNDL (81 aa)). 6 disulfide bridges follow: cysteine 417–cysteine 432, cysteine 419–cysteine 427, cysteine 426–cysteine 449, cysteine 440–cysteine 446, cysteine 445–cysteine 470, and cysteine 458–cysteine 477. Positions 462-464 (RGD) match the Cell attachment site motif.

It belongs to the venom metalloproteinase (M12B) family. P-II subfamily. P-IIa sub-subfamily. As to quaternary structure, monomer. It depends on Zn(2+) as a cofactor. Expressed by the venom gland.

The protein localises to the secreted. In terms of biological role, impairs hemostasis in the envenomed animal. Functionally, inhibits ADP- and collagen-induced human platelet aggregation with IC(50) of 123 and 135 nM, respectively. Inhibits sperm-egg binding in a concentration-dependent manner, but has no effect on the fusion of sperm-egg. The sequence is that of Zinc metalloproteinase/disintegrin from Protobothrops jerdonii (Jerdon's pitviper).